The following is a 366-amino-acid chain: MDKEYVGFAALPNQLHRKSVKKGFDFTLMVAGESGLGKSTLINSLFLTNLYEDRQVPDASARTTQTLTIERRGVEIEEGGIKVKLTLVDTPGFGDSVDCSDCWLPVVRFIEEQFEQYLRDESGLNRKNIQDSRVHCCLYFISPFGRGLRPLDVAFLRAVHEKVNIIPVIGKADALLPRETQVLKQKIRDQLKEEEINIYQFPECDSDEDEEFKKQNEEMKENIPFAVVGSSEVVREGTRPVRGRRYSWGTVEVENPHHCDFLNLRRMLVQTHLQDLKEVTHDLLYEGYRARCLQSLARPGARDRASRSKLSRQSATEIPLPMLPLADTEKLIREKDEELRRMQEMLEKMQAQMQQSQAQGEQSDVL.

Residues 22–295 enclose the Septin-type G domain; the sequence is KGFDFTLMVA…EGYRARCLQS (274 aa). A G1 motif region spans residues 32 to 39; it reads GESGLGKS. Residues 32–39, T66, G92, and 171–179 each bind GTP; these read GESGLGKS and KADALLPRE. Positions 89-92 are G3 motif; that stretch reads DTPG. Positions 170–173 are G4 motif; it reads GKAD. The residue at position 206 (S206) is a Phosphoserine. GTP-binding residues include G229 and R244. Phosphoserine; by AURKB is present on S247. The residue at position 250 (T250) is a Phosphothreonine. Residues S306 and S314 each carry the phosphoserine; by AURKB modification. The tract at residues 347–366 is disordered; sequence EKMQAQMQQSQAQGEQSDVL. Low complexity predominate over residues 349–366; sequence MQAQMQQSQAQGEQSDVL.

This sequence belongs to the TRAFAC class TrmE-Era-EngA-EngB-Septin-like GTPase superfamily. Septin GTPase family. As to quaternary structure, septins polymerize into heterooligomeric protein complexes that form filaments, and can associate with cellular membranes, actin filaments and microtubules. GTPase activity is required for filament formation. Interacts with AURKB.

Its subcellular location is the cytoplasm. It localises to the cytoskeleton. The protein localises to the microtubule organizing center. It is found in the centrosome. The protein resides in the midbody. Filament-forming cytoskeletal GTPase. May play a role in cytokinesis (Potential). This Rattus norvegicus (Rat) protein is Septin-1.